Reading from the N-terminus, the 370-residue chain is Anhydro-N-acetylmuramic acid kinase (370 aa).

Gly13 to Asp20 is an ATP binding site.

This sequence belongs to the anhydro-N-acetylmuramic acid kinase family.

The enzyme catalyses 1,6-anhydro-N-acetyl-beta-muramate + ATP + H2O = N-acetyl-D-muramate 6-phosphate + ADP + H(+). It functions in the pathway amino-sugar metabolism; 1,6-anhydro-N-acetylmuramate degradation. The protein operates within cell wall biogenesis; peptidoglycan recycling. Catalyzes the specific phosphorylation of 1,6-anhydro-N-acetylmuramic acid (anhMurNAc) with the simultaneous cleavage of the 1,6-anhydro ring, generating MurNAc-6-P. Is required for the utilization of anhMurNAc either imported from the medium or derived from its own cell wall murein, and thus plays a role in cell wall recycling. The protein is Anhydro-N-acetylmuramic acid kinase of Shewanella denitrificans (strain OS217 / ATCC BAA-1090 / DSM 15013).